The sequence spans 1356 residues: Pleckstrin homology domain-containing family H member 1 (1356 aa).

The stretch at Phe-27–Thr-172 forms a coiled coil. 3 disordered regions span residues Val-179–Ser-203, His-256–Arg-314, and Leu-354–His-414. 3 stretches are compositionally biased toward polar residues: residues Pro-194–Ser-203, His-256–Gln-265, and Val-285–Thr-297. A coiled-coil region spans residues Ser-359–Lys-407. Basic and acidic residues-rich tracts occupy residues Ser-362 to Met-377 and Lys-385 to Leu-399. Ser-451 is modified (phosphoserine). 2 consecutive PH domains span residues Ala-572–Lys-666 and Lys-681–Gly-790. A Phosphoserine modification is found at Ser-739. Residues Tyr-826–Leu-980 enclose the MyTH4 domain. The FERM domain maps to Phe-991–Ser-1327.

The sequence is that of Pleckstrin homology domain-containing family H member 1 (Plekhh1) from Mus musculus (Mouse).